A 445-amino-acid chain; its full sequence is UDP-glucuronic acid decarboxylase 2 (445 aa).

Ala2 carries the post-translational modification N-acetylalanine. At Ala2–Arg43 the chain is on the cytoplasmic side. Residues Leu44–Ser64 form a helical; Signal-anchor for type II membrane protein membrane-spanning segment. At Thr65–Ala445 the chain is on the lumenal side. An NAD(+)-binding site is contributed by Asp149 to Asp174. Substrate is bound at residue Arg258. Tyr261 (proton acceptor) is an active-site residue. Tyr261–Lys265 contacts NAD(+). Asn290 contacts substrate. An NAD(+)-binding site is contributed by Arg302. Substrate is bound by residues Val303–Phe307, Tyr320–Arg327, and Asp387–Arg391.

The protein belongs to the NAD(P)-dependent epimerase/dehydratase family. UDP-glucuronic acid decarboxylase subfamily. In terms of assembly, homodimer. It depends on NAD(+) as a cofactor. Ubiquitous.

It is found in the golgi apparatus. The protein resides in the golgi stack membrane. The catalysed reaction is UDP-alpha-D-glucuronate + H(+) = UDP-alpha-D-xylose + CO2. It participates in nucleotide-sugar biosynthesis; UDP-alpha-D-xylose biosynthesis; UDP-alpha-D-xylose from UDP-alpha-D-glucuronate: step 1/1. Functionally, catalyzes the NAD-dependent decarboxylation of UDP-glucuronic acid to UDP-xylose. Necessary for the biosynthesis of the core tetrasaccharide in glycosaminoglycan biosynthesis. The protein is UDP-glucuronic acid decarboxylase 2 (UXS2) of Arabidopsis thaliana (Mouse-ear cress).